Reading from the N-terminus, the 174-residue chain is MRVSVFAVGRMKSGPERELVERYFDRFAKAGPPLGLEFAGVSEIPESRGQTAQLRKAEEAQRIHEALDNAKSGGAKSGGTSSGGAALILLDERGKTLGSEAFAAIVGRMRDDGKRQLIVAIGGPDGHDPALRSRADLVLALGELTWPHQIARILIAEQLYRAATILAGHPYHRS.

S-adenosyl-L-methionine-binding positions include Leu-90, Gly-122, and 141 to 146; that span reads LGELTW.

Belongs to the RNA methyltransferase RlmH family. As to quaternary structure, homodimer.

It is found in the cytoplasm. It carries out the reaction pseudouridine(1915) in 23S rRNA + S-adenosyl-L-methionine = N(3)-methylpseudouridine(1915) in 23S rRNA + S-adenosyl-L-homocysteine + H(+). Its function is as follows. Specifically methylates the pseudouridine at position 1915 (m3Psi1915) in 23S rRNA. The polypeptide is Ribosomal RNA large subunit methyltransferase H (Brucella melitensis biotype 2 (strain ATCC 23457)).